A 25-amino-acid polypeptide reads, in one-letter code: Caerin-1.10 (25 aa).

Leu25 bears the Leucine amide mark.

Belongs to the frog skin active peptide (FSAP) family. Caerin subfamily. In terms of tissue distribution, expressed by the skin dorsal glands.

It is found in the secreted. In terms of biological role, antibacterial peptide with wide spectrum of activity. In Litoria rothii (Roth's tree frog), this protein is Caerin-1.10.